The chain runs to 351 residues: Serine protease inhibitor dipetalogastin (351 aa).

Positions 1-131 are excised as a propeptide; that stretch reads LIKELVNMVI…AETTNAMEVL (131 aa). 6 consecutive Kazal-like domains span residues 19–69, 72–122, 131–181, 184–234, 240–289, and 297–347; these read KELK…PCDE, HDFE…ECHA, LFQG…PCDE, HDFE…ECHP, QLIL…ECKV, and GEVR…RCLP. 18 disulfide bridges follow: cysteine 25–cysteine 50, cysteine 27–cysteine 46, cysteine 35–cysteine 67, cysteine 78–cysteine 103, cysteine 80–cysteine 99, cysteine 88–cysteine 120, cysteine 137–cysteine 162, cysteine 139–cysteine 158, cysteine 147–cysteine 179, cysteine 190–cysteine 215, cysteine 192–cysteine 211, cysteine 200–cysteine 232, cysteine 246–cysteine 271, cysteine 248–cysteine 267, cysteine 256–cysteine 287, cysteine 303–cysteine 328, cysteine 305–cysteine 324, and cysteine 313–cysteine 345.

The protein resides in the secreted. Its function is as follows. Thrombin inhibitor. Prevents blood clotting to allow insect to feed on blood. Also functions as an inhibitor of trypsin and plasmin. The polypeptide is Serine protease inhibitor dipetalogastin (Dipetalogaster maximus (Blood-sucking bug)).